The primary structure comprises 375 residues: Probable G-protein coupled receptor 27 (375 aa).

Topologically, residues 1–23 (MANASEPGGSGGGEAAALGLKLA) are extracellular. An N-linked (GlcNAc...) asparagine glycan is attached at N3. Residues 24–44 (TLSLLLCVSLAGNVLFALLIV) traverse the membrane as a helical segment. At 45 to 55 (RERSLHRAPYY) the chain is on the cytoplasmic side. Residues 56 to 76 (LLLDLCLADGLRALACLPAVM) form a helical membrane-spanning segment. Residues 77–97 (LAARRAAAAAGAPPGALGCKL) are Extracellular-facing. A disulfide bond links C95 and C171. A helical transmembrane segment spans residues 98–118 (LAFLAALFCFHAAFLLLGVGV). Residues 119–139 (TRYLAIAHHRFYAERLAGWPC) are Cytoplasmic-facing. A helical transmembrane segment spans residues 140-160 (AAMLVCAAWALALAAAFPPVL). Residues 161–181 (DGGGDDEDAPCALEQRPDGAP) lie on the Extracellular side of the membrane. The chain crosses the membrane as a helical span at residues 182–202 (GALGFLLLLAVVVGATHLVYL). Over 203 to 285 (RLLFFIHDRR…FKTEKRLCKM (83 aa)) the chain is Cytoplasmic. Residues 286–306 (FYAVTLLFLLLWGPYVVASYL) traverse the membrane as a helical segment. Over 307–320 (RVLVRPGAVPQAYL) the chain is Extracellular. The chain crosses the membrane as a helical span at residues 321-341 (TASVWLTFAQAGINPVVCFLF). Topologically, residues 342 to 375 (NRELRDCFRAQFPCCQSPRTTQATHPCDLKGIGL) are cytoplasmic.

It belongs to the G-protein coupled receptor 1 family. Highly expressed as a 3.0 kb transcript in brain, ovary, testis, heart, prostate and peripheral Leukocytes. Lower levels in pancreas and small intestine. A 2.3 kb transcript was also found in peripheral Leukocytes. In brain regions, detected as a 3.0 kb transcript in all regions tested. Highest levels in the caudate nucleus, putamen, hippocampus and subthalamic nucleus. Lowest level in the cerebellum.

It localises to the cell membrane. In terms of biological role, orphan receptor. Possible candidate for amine-like G-protein coupled receptor. The polypeptide is Probable G-protein coupled receptor 27 (GPR27) (Homo sapiens (Human)).